The following is an 86-amino-acid chain: Large ribosomal subunit protein uL30m (86 aa).

The segment at Gln-67–Asp-86 is disordered.

This sequence belongs to the universal ribosomal protein uL30 family. As to quaternary structure, component of the mitochondrial large ribosomal subunit (mt-LSU). Mature yeast 74S mitochondrial ribosomes consist of a small (37S) and a large (54S) subunit. The 37S small subunit contains a 15S ribosomal RNA (15S mt-rRNA) and 34 different proteins. The 54S large subunit contains a 21S rRNA (21S mt-rRNA) and 46 different proteins.

The protein localises to the mitochondrion. Its function is as follows. Component of the mitochondrial ribosome (mitoribosome), a dedicated translation machinery responsible for the synthesis of mitochondrial genome-encoded proteins, including at least some of the essential transmembrane subunits of the mitochondrial respiratory chain. The mitoribosomes are attached to the mitochondrial inner membrane and translation products are cotranslationally integrated into the membrane. This is Large ribosomal subunit protein uL30m (MRPL33) from Saccharomyces cerevisiae (strain ATCC 204508 / S288c) (Baker's yeast).